Consider the following 292-residue polypeptide: L-serine dehydratase, alpha chain (292 aa).

Belongs to the iron-sulfur dependent L-serine dehydratase family. In terms of assembly, heterooctamer of four alpha chains and four beta chains. [4Fe-4S] cluster is required as a cofactor.

The enzyme catalyses L-serine = pyruvate + NH4(+). Its pathway is carbohydrate biosynthesis; gluconeogenesis. The polypeptide is L-serine dehydratase, alpha chain (sdhA) (Peptoniphilus asaccharolyticus (Peptostreptococcus asaccharolyticus)).